The primary structure comprises 164 residues: Putative 4-hydroxy-4-methyl-2-oxoglutarate aldolase (164 aa).

Substrate is bound by residues 75–78 (GDLI) and arginine 97. An a divalent metal cation-binding site is contributed by aspartate 98.

This sequence belongs to the class II aldolase/RraA-like family. As to quaternary structure, homotrimer. It depends on a divalent metal cation as a cofactor.

It carries out the reaction 4-hydroxy-4-methyl-2-oxoglutarate = 2 pyruvate. The enzyme catalyses oxaloacetate + H(+) = pyruvate + CO2. Functionally, catalyzes the aldol cleavage of 4-hydroxy-4-methyl-2-oxoglutarate (HMG) into 2 molecules of pyruvate. Also contains a secondary oxaloacetate (OAA) decarboxylase activity due to the common pyruvate enolate transition state formed following C-C bond cleavage in the retro-aldol and decarboxylation reactions. This Shewanella oneidensis (strain ATCC 700550 / JCM 31522 / CIP 106686 / LMG 19005 / NCIMB 14063 / MR-1) protein is Putative 4-hydroxy-4-methyl-2-oxoglutarate aldolase.